Consider the following 236-residue polypeptide: Phosphatidylserine decarboxylase proenzyme (236 aa).

Serine 203 serves as the catalytic Schiff-base intermediate with substrate; via pyruvic acid. Serine 203 is subject to Pyruvic acid (Ser); by autocatalysis.

It belongs to the phosphatidylserine decarboxylase family. PSD-A subfamily. In terms of assembly, heterodimer of a large membrane-associated beta subunit and a small pyruvoyl-containing alpha subunit. Requires pyruvate as cofactor. In terms of processing, is synthesized initially as an inactive proenzyme. Formation of the active enzyme involves a self-maturation process in which the active site pyruvoyl group is generated from an internal serine residue via an autocatalytic post-translational modification. Two non-identical subunits are generated from the proenzyme in this reaction, and the pyruvate is formed at the N-terminus of the alpha chain, which is derived from the carboxyl end of the proenzyme. The post-translation cleavage follows an unusual pathway, termed non-hydrolytic serinolysis, in which the side chain hydroxyl group of the serine supplies its oxygen atom to form the C-terminus of the beta chain, while the remainder of the serine residue undergoes an oxidative deamination to produce ammonia and the pyruvoyl prosthetic group on the alpha chain.

The protein resides in the cell membrane. It carries out the reaction a 1,2-diacyl-sn-glycero-3-phospho-L-serine + H(+) = a 1,2-diacyl-sn-glycero-3-phosphoethanolamine + CO2. It functions in the pathway phospholipid metabolism; phosphatidylethanolamine biosynthesis; phosphatidylethanolamine from CDP-diacylglycerol: step 2/2. Catalyzes the formation of phosphatidylethanolamine (PtdEtn) from phosphatidylserine (PtdSer). The sequence is that of Phosphatidylserine decarboxylase proenzyme from Saccharopolyspora erythraea (strain ATCC 11635 / DSM 40517 / JCM 4748 / NBRC 13426 / NCIMB 8594 / NRRL 2338).